The following is a 322-amino-acid chain: Phosphatidylserine decarboxylase proenzyme (322 aa).

Residues Asp90, His147, and Ser254 each act as charge relay system; for autoendoproteolytic cleavage activity in the active site. Ser254 acts as the Schiff-base intermediate with substrate; via pyruvic acid; for decarboxylase activity in catalysis. Ser254 carries the pyruvic acid (Ser); by autocatalysis modification. The interval 297 to 322 (PAPLPAEEIKAEHDASPLVDNKKDDT) is disordered. Positions 303–322 (EEIKAEHDASPLVDNKKDDT) are enriched in basic and acidic residues.

This sequence belongs to the phosphatidylserine decarboxylase family. PSD-B subfamily. Prokaryotic type I sub-subfamily. In terms of assembly, heterodimer of a large membrane-associated beta subunit and a small pyruvoyl-containing alpha subunit. Requires pyruvate as cofactor. Is synthesized initially as an inactive proenzyme. Formation of the active enzyme involves a self-maturation process in which the active site pyruvoyl group is generated from an internal serine residue via an autocatalytic post-translational modification. Two non-identical subunits are generated from the proenzyme in this reaction, and the pyruvate is formed at the N-terminus of the alpha chain, which is derived from the carboxyl end of the proenzyme. The autoendoproteolytic cleavage occurs by a canonical serine protease mechanism, in which the side chain hydroxyl group of the serine supplies its oxygen atom to form the C-terminus of the beta chain, while the remainder of the serine residue undergoes an oxidative deamination to produce ammonia and the pyruvoyl prosthetic group on the alpha chain. During this reaction, the Ser that is part of the protease active site of the proenzyme becomes the pyruvoyl prosthetic group, which constitutes an essential element of the active site of the mature decarboxylase.

Its subcellular location is the cell membrane. It catalyses the reaction a 1,2-diacyl-sn-glycero-3-phospho-L-serine + H(+) = a 1,2-diacyl-sn-glycero-3-phosphoethanolamine + CO2. Its pathway is phospholipid metabolism; phosphatidylethanolamine biosynthesis; phosphatidylethanolamine from CDP-diacylglycerol: step 2/2. In terms of biological role, catalyzes the formation of phosphatidylethanolamine (PtdEtn) from phosphatidylserine (PtdSer). This Salmonella typhi protein is Phosphatidylserine decarboxylase proenzyme.